Consider the following 734-residue polypeptide: Photosystem I P700 chlorophyll a apoprotein A2 (734 aa).

8 helical membrane passes run 46-69 (IFAS…FHVA), 135-158 (LYTG…LHLQ), 175-199 (LNHH…HVAI), 273-291 (IAHH…GHMY), 330-353 (IHFQ…QHMY), 369-395 (AALY…IFFI), 417-439 (AIIS…LYVH), and 517-535 (FLVH…LILV). 2 residues coordinate [4Fe-4S] cluster: C559 and C568. Transmembrane regions (helical) follow at residues 575–596 (AFYL…YWHW) and 643–665 (LSVW…MFLI). 3 residues coordinate chlorophyll a: H654, M662, and Y670. W671 lines the phylloquinone pocket. The chain crosses the membrane as a helical span at residues 707 to 727 (LVGLAHFSVGYIFTYAAFLIA).

The protein belongs to the PsaA/PsaB family. In terms of assembly, the PsaA/B heterodimer binds the P700 chlorophyll special pair and subsequent electron acceptors. PSI consists of a core antenna complex that captures photons, and an electron transfer chain that converts photonic excitation into a charge separation. The eukaryotic PSI reaction center is composed of at least 11 subunits. P700 is a chlorophyll a/chlorophyll a' dimer, A0 is one or more chlorophyll a, A1 is one or both phylloquinones and FX is a shared 4Fe-4S iron-sulfur center. serves as cofactor.

The protein resides in the plastid. The protein localises to the chloroplast thylakoid membrane. It carries out the reaction reduced [plastocyanin] + hnu + oxidized [2Fe-2S]-[ferredoxin] = oxidized [plastocyanin] + reduced [2Fe-2S]-[ferredoxin]. In terms of biological role, psaA and PsaB bind P700, the primary electron donor of photosystem I (PSI), as well as the electron acceptors A0, A1 and FX. PSI is a plastocyanin-ferredoxin oxidoreductase, converting photonic excitation into a charge separation, which transfers an electron from the donor P700 chlorophyll pair to the spectroscopically characterized acceptors A0, A1, FX, FA and FB in turn. Oxidized P700 is reduced on the lumenal side of the thylakoid membrane by plastocyanin. The polypeptide is Photosystem I P700 chlorophyll a apoprotein A2 (Oryza sativa (Rice)).